The chain runs to 167 residues: Secreted LysM effector Blys6 (167 aa).

A signal peptide spans 1–16 (MKGLCVAACTLVLAAA). In terms of domain architecture, LysM spans 109 to 162 (KWYRIRRGDDCGPVASEFGISADQLIEWNPWLSADVDGTHYPCMNIWPTDNLCV).

It belongs to the secreted LysM effector family.

Its function is as follows. Might have a role in sequestration of chitin oligosaccharides (breakdown products of fungal cell walls that are released during invasion and act as triggers of host immunity) to dampen host defense. In Beauveria bassiana (strain ARSEF 2860) (White muscardine disease fungus), this protein is Secreted LysM effector Blys6.